The primary structure comprises 257 residues: Trans-aconitate 2-methyltransferase (257 aa).

The protein belongs to the methyltransferase superfamily. Tam family.

The protein resides in the cytoplasm. It catalyses the reaction trans-aconitate + S-adenosyl-L-methionine = (E)-3-(methoxycarbonyl)pent-2-enedioate + S-adenosyl-L-homocysteine. Functionally, catalyzes the S-adenosylmethionine monomethyl esterification of trans-aconitate. This is Trans-aconitate 2-methyltransferase from Sinorhizobium medicae (strain WSM419) (Ensifer medicae).